We begin with the raw amino-acid sequence, 373 residues long: Dual-specificity RNA methyltransferase RlmN (373 aa).

The active-site Proton acceptor is E94. Residues 100-339 (EDDRATLCVS…VIVRKTRGDD (240 aa)) form the Radical SAM core domain. C107 and C344 are oxidised to a cystine. [4Fe-4S] cluster is bound by residues C114, C118, and C121. Residues 168–169 (GE), S200, 222–224 (SIH), and N301 each bind S-adenosyl-L-methionine. The active-site S-methylcysteine intermediate is C344.

This sequence belongs to the radical SAM superfamily. RlmN family. It depends on [4Fe-4S] cluster as a cofactor.

The protein resides in the cytoplasm. It carries out the reaction adenosine(2503) in 23S rRNA + 2 reduced [2Fe-2S]-[ferredoxin] + 2 S-adenosyl-L-methionine = 2-methyladenosine(2503) in 23S rRNA + 5'-deoxyadenosine + L-methionine + 2 oxidized [2Fe-2S]-[ferredoxin] + S-adenosyl-L-homocysteine. It catalyses the reaction adenosine(37) in tRNA + 2 reduced [2Fe-2S]-[ferredoxin] + 2 S-adenosyl-L-methionine = 2-methyladenosine(37) in tRNA + 5'-deoxyadenosine + L-methionine + 2 oxidized [2Fe-2S]-[ferredoxin] + S-adenosyl-L-homocysteine. Its function is as follows. Specifically methylates position 2 of adenine 2503 in 23S rRNA and position 2 of adenine 37 in tRNAs. m2A2503 modification seems to play a crucial role in the proofreading step occurring at the peptidyl transferase center and thus would serve to optimize ribosomal fidelity. This is Dual-specificity RNA methyltransferase RlmN from Shewanella sp. (strain W3-18-1).